Consider the following 634-residue polypeptide: Chaperone protein HtpG (634 aa).

The segment at 1–342 (MTVETQKETL…SNDLSLNVSR (342 aa)) is a; substrate-binding. The tract at residues 343–559 (EILQKDPIID…EQDLGLQMRQ (217 aa)) is b. The segment at 560–634 (ILEASGQKVP…LNKLLVELSA (75 aa)) is c.

Belongs to the heat shock protein 90 family. Homodimer.

The protein resides in the cytoplasm. Its function is as follows. Molecular chaperone. Has ATPase activity. The chain is Chaperone protein HtpG from Pseudomonas putida (strain ATCC 47054 / DSM 6125 / CFBP 8728 / NCIMB 11950 / KT2440).